A 427-amino-acid chain; its full sequence is 2-oxoglutarate and iron-dependent oxygenase JMJD4 (427 aa).

The JmjC domain occupies 147–306; that stretch reads SLVNDLEDIF…NMWHFLQQEL (160 aa). Residues histidine 194, aspartate 196, and histidine 274 each contribute to the Fe cation site.

Belongs to the JMJD6 family. In terms of assembly, interacts with ETF1. Interacts with the ETF1-GSPT1 complex. Fe(2+) serves as cofactor.

Its subcellular location is the cytoplasm. It catalyses the reaction L-lysyl-[protein] + 2-oxoglutarate + O2 = 4-hydroxy-L-lysyl-[protein] + succinate + CO2. In terms of biological role, catalyzes the 2-oxoglutarate and iron-dependent C4-lysyl hydroxylation of ETF1 at 'Lys-63' thereby promoting the translational termination efficiency of ETF1. Not essential for embryonic stem cell (ESC) maintenance and the embryonic and postnatal development. This Mus musculus (Mouse) protein is 2-oxoglutarate and iron-dependent oxygenase JMJD4 (Jmjd4).